The chain runs to 492 residues: Target of Myb1 membrane trafficking protein (492 aa).

Met-1 carries the N-acetylmethionine modification. Ser-11 is modified (phosphoserine). The region spanning 20–152 (ATDGSLQSED…DLRRKGLEFP (133 aa)) is the VHS domain. The KRKK signature appears at 48–56 (KDAFRAVKK). The residue at position 160 (Ser-160) is a Phosphoserine. At Thr-164 the chain carries Phosphothreonine. Positions 167–195 (RTVFNSETPSRQNSVSSNTSQRGDLSQHA) are enriched in polar residues. The tract at residues 167 to 215 (RTVFNSETPSRQNSVSSNTSQRGDLSQHATPLPTPAVLPGDSPITPTPE) is disordered. A phosphoserine mark is found at Ser-176, Ser-180, and Ser-208. The 89-residue stretch at 215–303 (EQIGKLRSEL…VFLRHERFER (89 aa)) folds into the GAT domain. The segment at 321 to 326 (DLIDMG) is clathrin box. Residues Ser-355 and Ser-376 each carry the phosphoserine modification. Residue Lys-385 forms a Glycyl lysine isopeptide (Lys-Gly) (interchain with G-Cter in SUMO2) linkage. The tract at residues 392–463 (TDGLAGALDA…ADRLPNLASP (72 aa)) is interaction with MYO6. The interval 450–492 (RAKAADRLPNLASPSAEGPPRPSPGTAPRRKTQEKDDDMLFAL) is disordered. At Ser-462 the chain carries Phosphoserine.

The protein belongs to the TOM1 family. As to quaternary structure, found in a complex with TOLLIP; interacts (via GAT domain) with TOLLIP (via N-terminus); the interactions leads to TOM1-recruitment to endosomes and inhibition of TOLLIP binding to PtdIns(3)P. Interacts (via GAT domain and the C-terminal part of the VHS domain) with UBC/ubiquitin. Interacts (via clathrin box and C-terminus) with clathrin heavy chain. Interacts with MYO6. Interacts with TAX1BP1; CALCOCO2/NDP52 and OPTN; the interaction is indirect and is mediated by MYO6, which acts as a bridge between TOM1 and the three autophagy receptors. Interacts (via C-terminus) with ZFYVE16 (via C-terminus); interaction is required to target TOM1 and clathrin to endosomes. Interacts with LRBA. Post-translationally, monoubiquitinated. Ubiquitous. In adult brain, it is highly expressed at the mesencephalic level, in the hippocampal formation and medial lemniscus. In cerebellum, it is highly expressed in Purkinje cells and granular layers.

Its subcellular location is the cytoplasm. The protein resides in the endosome membrane. It localises to the early endosome membrane. Adapter protein that plays a role in the intracellular membrane trafficking of ubiquitinated proteins, thereby participating in autophagy, ubiquitination-dependent signaling and receptor recycling pathways. Acts as a MYO6/Myosin VI adapter protein that targets MYO6 to endocytic structures. Together with MYO6, required for autophagosomal delivery of endocytic cargo, the maturation of autophagosomes and their fusion with lysosomes. MYO6 links TOM1 with autophagy receptors, such as TAX1BP1; CALCOCO2/NDP52 and OPTN. Binds to polyubiquitinated proteins via its GAT domain. In a complex with TOLLIP, recruits ubiquitin-conjugated proteins onto early endosomes. The Tom1-Tollip complex may regulate endosomal trafficking by linking polyubiquitinated proteins to clathrin. Mediates clathrin recruitment to early endosomes by ZFYVE16. Modulates binding of TOLLIP to phosphatidylinositol 3-phosphate (PtdIns(3)P) via binding competition; the association with TOLLIP may favor the release of TOLLIP from endosomal membranes, allowing TOLLIP to commit to cargo trafficking. Acts as a phosphatidylinositol 5-phosphate (PtdIns(5)P) effector by binding to PtdIns(5)P, thereby regulating endosomal maturation. PtdIns(5)P-dependent recruitment to signaling endosomes may block endosomal maturation. Also inhibits Toll-like receptor (TLR) signaling and participates in immune receptor recycling. The chain is Target of Myb1 membrane trafficking protein from Mus musculus (Mouse).